A 1215-amino-acid chain; its full sequence is DNA-directed RNA polymerase subunit beta' (1215 aa).

The Zn(2+) site is built by Cys60, Cys62, Cys75, and Cys78. Residues Asp449, Asp451, and Asp453 each contribute to the Mg(2+) site. The Zn(2+) site is built by Cys818, Cys892, Cys899, and Cys902.

Belongs to the RNA polymerase beta' chain family. In terms of assembly, the RNAP catalytic core consists of 2 alpha, 1 beta, 1 beta' and 1 omega subunit. When a sigma factor is associated with the core the holoenzyme is formed, which can initiate transcription. Mg(2+) serves as cofactor. Zn(2+) is required as a cofactor.

The enzyme catalyses RNA(n) + a ribonucleoside 5'-triphosphate = RNA(n+1) + diphosphate. DNA-dependent RNA polymerase catalyzes the transcription of DNA into RNA using the four ribonucleoside triphosphates as substrates. The chain is DNA-directed RNA polymerase subunit beta' from Limosilactobacillus fermentum (strain NBRC 3956 / LMG 18251) (Lactobacillus fermentum).